Here is a 101-residue protein sequence, read N- to C-terminus: Iron-sulfur cluster assembly protein CyaY (101 aa).

It belongs to the frataxin family.

In terms of biological role, involved in iron-sulfur (Fe-S) cluster assembly. May act as a regulator of Fe-S biogenesis. The polypeptide is Iron-sulfur cluster assembly protein CyaY (Rickettsia akari (strain Hartford)).